A 756-amino-acid polypeptide reads, in one-letter code: Ent-kaur-16-ene synthase, chloroplastic (756 aa).

Mg(2+) is bound by residues D496, D500, N639, and E647. Residues 496 to 500 (DDFFD) carry the DDXXD motif motif.

Belongs to the terpene synthase family. Mg(2+) serves as cofactor. Highly expressed in panicles and at lower levels in leaves and stems.

It localises to the plastid. It is found in the chloroplast. The catalysed reaction is ent-copalyl diphosphate = ent-kaur-16-ene + diphosphate. Its pathway is plant hormone biosynthesis; gibberellin biosynthesis. Catalyzes the conversion of ent-copalyl diphosphate to the gibberellin precursor ent-kaur-16-ene. The sequence is that of Ent-kaur-16-ene synthase, chloroplastic (KS1) from Oryza sativa subsp. japonica (Rice).